The primary structure comprises 391 residues: DNA-directed RNA polymerase subunit Rpo1C (391 aa).

The protein belongs to the RNA polymerase beta' chain family. As to quaternary structure, part of the RNA polymerase complex.

It is found in the cytoplasm. It carries out the reaction RNA(n) + a ribonucleoside 5'-triphosphate = RNA(n+1) + diphosphate. Its function is as follows. DNA-dependent RNA polymerase (RNAP) catalyzes the transcription of DNA into RNA using the four ribonucleoside triphosphates as substrates. Forms part of the jaw domain. The sequence is that of DNA-directed RNA polymerase subunit Rpo1C from Thermococcus gammatolerans (strain DSM 15229 / JCM 11827 / EJ3).